Here is a 200-residue protein sequence, read N- to C-terminus: Recombination protein RecR (200 aa).

The C4-type zinc finger occupies 57–72 (CSHCRTFTENERCEIC). In terms of domain architecture, Toprim spans 81–176 (GLLCVVESPA…KVSRIAHGVP (96 aa)).

It belongs to the RecR family.

Functionally, may play a role in DNA repair. It seems to be involved in an RecBC-independent recombinational process of DNA repair. It may act with RecF and RecO. The chain is Recombination protein RecR from Aeromonas hydrophila subsp. hydrophila (strain ATCC 7966 / DSM 30187 / BCRC 13018 / CCUG 14551 / JCM 1027 / KCTC 2358 / NCIMB 9240 / NCTC 8049).